The following is a 214-amino-acid chain: A-type ATP synthase subunit D (214 aa).

It belongs to the V-ATPase D subunit family. Has multiple subunits with at least A(3), B(3), C, D, E, F, H, I and proteolipid K(x).

The protein localises to the cell membrane. Its function is as follows. Component of the A-type ATP synthase that produces ATP from ADP in the presence of a proton gradient across the membrane. The chain is A-type ATP synthase subunit D from Pyrococcus abyssi (strain GE5 / Orsay).